A 579-amino-acid chain; its full sequence is Basic helix-loop-helix ARNT-like protein 2 (579 aa).

Residues 1 to 198 are interaction with PER2; sequence MEFPRKRRGR…SPREKPIDTK (198 aa). Residues 4 to 9 carry the Nuclear localization signal motif; that stretch reads PRKRRG. Residues 40 to 61 are disordered; it reads RTGVSAPSGIREAHSQMEKRRR. Positions 48-101 constitute a bHLH domain; the sequence is GIREAHSQMEKRRRDKMNHLIQKLSSMIPPHIPTAHKLDKLSVLRRAVQYLRSL. Over residues 50–59 the composition is skewed to basic and acidic residues; it reads REAHSQMEKR. The Nuclear export signal 1 motif lies at 118–128; sequence IQDKELSHLIL. Residues 119 to 190 form the PAS 1 domain; sequence QDKELSHLIL…KEQLSCDGSP (72 aa). Residues 186 to 196 are compositionally biased toward basic and acidic residues; it reads CDGSPREKPID. Positions 186 to 213 are disordered; that stretch reads CDGSPREKPIDTKTSQVYSHPYTGRPRM. A Glycyl lysine isopeptide (Lys-Gly) (interchain with G-Cter in SUMO2 and SUMO3) cross-link involves residue Lys-226. Residue Lys-233 forms a Glycyl lysine isopeptide (Lys-Gly) (interchain with G-Cter in SUMO2) linkage. The PAS 2 domain maps to 296 to 366; that stretch reads VPQKSGKINV…DKHKAVLQSK (71 aa). Residues 331 to 339 carry the Nuclear export signal 2 motif; the sequence is LGYLPQELL. Residues 371–414 form the PAC domain; it reads TDSYKFRVKDGAFVTLKSEWFSFTNPWTKELEYIVSVNTLVLGR. The tract at residues 469–536 is disordered; it reads RLHSSSPEDA…AHPHGPLPGD (68 aa).

As to quaternary structure, component of the circadian core oscillator, which includes the CRY proteins, CLOCK, or NPAS2, BMAL1 or BMAL2, CSNK1D and/or CSNK1E, TIMELESS and the PER proteins. Interacts directly with CLOCK to form the BMAL2-CLOCK transactivator. Can form heterodimers or homodimers which interact directly with CLOCK to form the transcription activator. Interacts with NPAS2 and HIF1A. Interacts with PER2. As to expression, expressed in the suprachiasmatic nucleus (SCN).

It is found in the nucleus. Functionally, transcriptional activator which forms a core component of the circadian clock. The circadian clock, an internal time-keeping system, regulates various physiological processes through the generation of approximately 24 hour circadian rhythms in gene expression, which are translated into rhythms in metabolism and behavior. It is derived from the Latin roots 'circa' (about) and 'diem' (day) and acts as an important regulator of a wide array of physiological functions including metabolism, sleep, body temperature, blood pressure, endocrine, immune, cardiovascular, and renal function. Consists of two major components: the central clock, residing in the suprachiasmatic nucleus (SCN) of the brain, and the peripheral clocks that are present in nearly every tissue and organ system. Both the central and peripheral clocks can be reset by environmental cues, also known as Zeitgebers (German for 'timegivers'). The predominant Zeitgeber for the central clock is light, which is sensed by retina and signals directly to the SCN. The central clock entrains the peripheral clocks through neuronal and hormonal signals, body temperature and feeding-related cues, aligning all clocks with the external light/dark cycle. Circadian rhythms allow an organism to achieve temporal homeostasis with its environment at the molecular level by regulating gene expression to create a peak of protein expression once every 24 hours to control when a particular physiological process is most active with respect to the solar day. Transcription and translation of core clock components (CLOCK, NPAS2, BMAL1, BMAL2, PER1, PER2, PER3, CRY1 and CRY2) plays a critical role in rhythm generation, whereas delays imposed by post-translational modifications (PTMs) are important for determining the period (tau) of the rhythms (tau refers to the period of a rhythm and is the length, in time, of one complete cycle). A diurnal rhythm is synchronized with the day/night cycle, while the ultradian and infradian rhythms have a period shorter and longer than 24 hours, respectively. Disruptions in the circadian rhythms contribute to the pathology of cardiovascular diseases, cancer, metabolic syndromes and aging. A transcription/translation feedback loop (TTFL) forms the core of the molecular circadian clock mechanism. Transcription factors, CLOCK or NPAS2 and BMAL1 or BMAL2, form the positive limb of the feedback loop, act in the form of a heterodimer and activate the transcription of core clock genes and clock-controlled genes (involved in key metabolic processes), harboring E-box elements (5'-CACGTG-3') within their promoters. The core clock genes: PER1/2/3 and CRY1/2 which are transcriptional repressors form the negative limb of the feedback loop and interact with the CLOCK|NPAS2-BMAL1|BMAL2 heterodimer inhibiting its activity and thereby negatively regulating their own expression. This heterodimer also activates nuclear receptors NR1D1/2 and RORA/B/G, which form a second feedback loop and which activate and repress BMAL1 transcription, respectively. The CLOCK-BMAL2 heterodimer activates the transcription of SERPINE1/PAI1 and BHLHE40/DEC1. This chain is Basic helix-loop-helix ARNT-like protein 2 (Bmal2), found in Mus musculus (Mouse).